A 156-amino-acid polypeptide reads, in one-letter code: Small ribosomal subunit protein uS7 (156 aa).

The protein belongs to the universal ribosomal protein uS7 family. Part of the 30S ribosomal subunit. Contacts proteins S9 and S11.

Its function is as follows. One of the primary rRNA binding proteins, it binds directly to 16S rRNA where it nucleates assembly of the head domain of the 30S subunit. Is located at the subunit interface close to the decoding center, probably blocks exit of the E-site tRNA. This Acidobacterium capsulatum (strain ATCC 51196 / DSM 11244 / BCRC 80197 / JCM 7670 / NBRC 15755 / NCIMB 13165 / 161) protein is Small ribosomal subunit protein uS7.